The chain runs to 290 residues: Small ribosomal subunit biogenesis GTPase RsgA (290 aa).

Residues 62 to 213 (KNSLVRPPIV…IADTPGFSSL (152 aa)) enclose the CP-type G domain. GTP-binding positions include 111 to 114 (SKMD) and 156 to 164 (GQTGVGKST). Zn(2+)-binding residues include cysteine 237, cysteine 242, histidine 244, and cysteine 250.

This sequence belongs to the TRAFAC class YlqF/YawG GTPase family. RsgA subfamily. In terms of assembly, monomer. Associates with 30S ribosomal subunit, binds 16S rRNA. The cofactor is Zn(2+).

The protein resides in the cytoplasm. One of several proteins that assist in the late maturation steps of the functional core of the 30S ribosomal subunit. Helps release RbfA from mature subunits. May play a role in the assembly of ribosomal proteins into the subunit. Circularly permuted GTPase that catalyzes slow GTP hydrolysis, GTPase activity is stimulated by the 30S ribosomal subunit. The polypeptide is Small ribosomal subunit biogenesis GTPase RsgA (Streptococcus pyogenes serotype M3 (strain ATCC BAA-595 / MGAS315)).